The chain runs to 396 residues: Chorismate synthase (396 aa).

NADP(+) contacts are provided by R40 and R46. FMN-binding positions include 134–136, 257–258, G302, 317–321, and R343; these read RSS, QA, and KPIPS.

The protein belongs to the chorismate synthase family. Homotetramer. FMNH2 is required as a cofactor.

It carries out the reaction 5-O-(1-carboxyvinyl)-3-phosphoshikimate = chorismate + phosphate. Its pathway is metabolic intermediate biosynthesis; chorismate biosynthesis; chorismate from D-erythrose 4-phosphate and phosphoenolpyruvate: step 7/7. In terms of biological role, catalyzes the anti-1,4-elimination of the C-3 phosphate and the C-6 proR hydrogen from 5-enolpyruvylshikimate-3-phosphate (EPSP) to yield chorismate, which is the branch point compound that serves as the starting substrate for the three terminal pathways of aromatic amino acid biosynthesis. This reaction introduces a second double bond into the aromatic ring system. In Bifidobacterium animalis subsp. lactis (strain AD011), this protein is Chorismate synthase.